A 412-amino-acid polypeptide reads, in one-letter code: Multifunctional CCA protein (412 aa).

ATP-binding residues include Gly8 and Arg11. Positions 8 and 11 each coordinate CTP. 2 residues coordinate Mg(2+): Asp21 and Asp23. 3 residues coordinate ATP: Arg91, Arg138, and Arg141. Residues Arg91, Arg138, and Arg141 each coordinate CTP. One can recognise an HD domain in the interval Arg229 to Trp334.

Belongs to the tRNA nucleotidyltransferase/poly(A) polymerase family. Bacterial CCA-adding enzyme type 1 subfamily. In terms of assembly, monomer. Can also form homodimers and oligomers. Mg(2+) serves as cofactor. Ni(2+) is required as a cofactor.

It carries out the reaction a tRNA precursor + 2 CTP + ATP = a tRNA with a 3' CCA end + 3 diphosphate. The catalysed reaction is a tRNA with a 3' CCA end + 2 CTP + ATP = a tRNA with a 3' CCACCA end + 3 diphosphate. Functionally, catalyzes the addition and repair of the essential 3'-terminal CCA sequence in tRNAs without using a nucleic acid template. Adds these three nucleotides in the order of C, C, and A to the tRNA nucleotide-73, using CTP and ATP as substrates and producing inorganic pyrophosphate. tRNA 3'-terminal CCA addition is required both for tRNA processing and repair. Also involved in tRNA surveillance by mediating tandem CCA addition to generate a CCACCA at the 3' terminus of unstable tRNAs. While stable tRNAs receive only 3'-terminal CCA, unstable tRNAs are marked with CCACCA and rapidly degraded. This chain is Multifunctional CCA protein, found in Haemophilus ducreyi (strain 35000HP / ATCC 700724).